Here is a 147-residue protein sequence, read N- to C-terminus: Sec-independent protein translocase protein TatB (147 aa).

A helical transmembrane segment spans residues 1–21; the sequence is MFDFGFSELIVIAVVTLIVVG. The segment at 117 to 147 is disordered; it reads APAPMSLAPHGDAASAGREPAAVPGSGPEKA.

This sequence belongs to the TatB family. The Tat system comprises two distinct complexes: a TatABC complex, containing multiple copies of TatA, TatB and TatC subunits, and a separate TatA complex, containing only TatA subunits. Substrates initially bind to the TatABC complex, which probably triggers association of the separate TatA complex to form the active translocon.

It localises to the cell inner membrane. In terms of biological role, part of the twin-arginine translocation (Tat) system that transports large folded proteins containing a characteristic twin-arginine motif in their signal peptide across membranes. Together with TatC, TatB is part of a receptor directly interacting with Tat signal peptides. TatB may form an oligomeric binding site that transiently accommodates folded Tat precursor proteins before their translocation. In Aromatoleum aromaticum (strain DSM 19018 / LMG 30748 / EbN1) (Azoarcus sp. (strain EbN1)), this protein is Sec-independent protein translocase protein TatB.